Reading from the N-terminus, the 340-residue chain is Phosphoribosylformylglycinamidine cyclo-ligase (340 aa).

The protein belongs to the AIR synthase family.

The protein localises to the cytoplasm. The catalysed reaction is 2-formamido-N(1)-(5-O-phospho-beta-D-ribosyl)acetamidine + ATP = 5-amino-1-(5-phospho-beta-D-ribosyl)imidazole + ADP + phosphate + H(+). The protein operates within purine metabolism; IMP biosynthesis via de novo pathway; 5-amino-1-(5-phospho-D-ribosyl)imidazole from N(2)-formyl-N(1)-(5-phospho-D-ribosyl)glycinamide: step 2/2. The chain is Phosphoribosylformylglycinamidine cyclo-ligase from Streptococcus pyogenes serotype M6 (strain ATCC BAA-946 / MGAS10394).